The chain runs to 272 residues: uncharacterized protein (272 aa).

One can recognise an AB hydrolase-1 domain in the interval 20–133; that stretch reads PVLIFIPGAN…PPINTFLPDS (114 aa).

The protein belongs to the AB hydrolase superfamily.

This is an uncharacterized protein from Staphylococcus aureus (strain MSSA476).